A 149-amino-acid chain; its full sequence is Transcriptional repressor NrdR (149 aa).

Residues 3-34 (CPFCSAVDTKVIDSRLVGEGTQVRRRRQCVIC) fold into a zinc finger. Positions 49–139 (PRVIKSNDVR…VYRSFEDIRE (91 aa)) constitute an ATP-cone domain.

Belongs to the NrdR family. Requires Zn(2+) as cofactor.

Functionally, negatively regulates transcription of bacterial ribonucleotide reductase nrd genes and operons by binding to NrdR-boxes. The protein is Transcriptional repressor NrdR of Sodalis glossinidius (strain morsitans).